The sequence spans 96 residues: Co-chaperonin GroES (96 aa).

Belongs to the GroES chaperonin family. In terms of assembly, heptamer of 7 subunits arranged in a ring. Interacts with the chaperonin GroEL.

It is found in the cytoplasm. Functionally, together with the chaperonin GroEL, plays an essential role in assisting protein folding. The GroEL-GroES system forms a nano-cage that allows encapsulation of the non-native substrate proteins and provides a physical environment optimized to promote and accelerate protein folding. GroES binds to the apical surface of the GroEL ring, thereby capping the opening of the GroEL channel. This chain is Co-chaperonin GroES, found in Methylorubrum populi (strain ATCC BAA-705 / NCIMB 13946 / BJ001) (Methylobacterium populi).